Consider the following 161-residue polypeptide: CASP-like protein 1C2 (161 aa).

The Cytoplasmic portion of the chain corresponds to 1–7 (MAKNTDR). A helical transmembrane segment spans residues 8-28 (ICFLVLRLLAFGATLSAAIVM). Over 29-53 (ATSHERTTYLSLSIEAKYSHTPAFK) the chain is Extracellular. The chain crosses the membrane as a helical span at residues 54–74 (YFVIANAIGSAYSLLLLFLPS). Residues 75–86 (HGSLWPLVIASD) are Cytoplasmic-facing. A helical transmembrane segment spans residues 87 to 107 (VVITMFLTSSISAALSIAYVG). The Extracellular portion of the chain corresponds to 108–131 (KKGNSYAGWLPICDQVPNYCNHVT). A helical membrane pass occupies residues 132–152 (GALAAGFIGVVLYMVLLQYSI). The Cytoplasmic segment spans residues 153-161 (YTKCCKSSS).

The protein belongs to the Casparian strip membrane proteins (CASP) family. As to quaternary structure, homodimer and heterodimers.

The protein localises to the cell membrane. In Vitis vinifera (Grape), this protein is CASP-like protein 1C2.